The chain runs to 896 residues: Zinc finger protein 574 (896 aa).

C2H2-type zinc fingers lie at residues 16–38, 76–98, and 126–148; these read YVCS…QNSH, YQCL…QELH, and YECV…RQTH. Residue S164 is modified to Phosphoserine. The segment at 214 to 236 adopts a C2H2-type 4 zinc-finger fold; the sequence is YKCSECSQLFQLPADFLEHQATH. The segment at 239–301 is disordered; that stretch reads APVPESQEPA…RARRNNSGEA (63 aa). The span at 247-257 shows a compositional bias: polar residues; that stretch reads PALQQEVQASS. Residues 274–287 are compositionally biased toward basic and acidic residues; sequence HSYELRNGEAIGRD. Residue S298 is modified to Phosphoserine. C2H2-type zinc fingers lie at residues 309–331, 336–358, 364–386, and 392–413; these read LFCS…LRSH, FKCP…LGDH, FLCV…RRAH, and HSCP…RRTH. The disordered stretch occupies residues 434-460; sequence FPEPAPAETGEPEAPEPPVSEETSAGP. 6 consecutive C2H2-type zinc fingers follow at residues 466–489, 495–517, 523–545, 551–573, 579–601, and 607–630; these read YRCL…RFVH, HKCS…LRTH, FPCP…RLTH, YRCG…RLVH, YRCQ…RYHH, and YKCR…LVVH. The C2H2-type 15; degenerate zinc finger occupies 636–659; sequence HRCPSCGAAFPSSLRLREHRCAAA. The C2H2-type 16 zinc finger occupies 667-689; sequence FECGTCGKKVGSAARLQAHEAAH. Positions 687–733 are disordered; that stretch reads AAHAAAGPGEVLAKEPPAPRAPRATRAPVASPAGLGGTATASPAAPA. Positions 707–732 are enriched in low complexity; the sequence is APRATRAPVASPAGLGGTATASPAAP. At S717 the chain carries Phosphoserine. T724 is modified (phosphothreonine). S728 carries the phosphoserine modification. 4 consecutive C2H2-type zinc fingers follow at residues 738 to 760, 766 to 788, 794 to 816, and 822 to 844; these read LECS…RRIH, YPCP…RRLH, FACE…RRIH, and YSCP…RKTH. Residue R832 is modified to Asymmetric dimethylarginine.

It belongs to the krueppel C2H2-type zinc-finger protein family.

It localises to the nucleus. Functionally, may be involved in transcriptional regulation. This Macaca fascicularis (Crab-eating macaque) protein is Zinc finger protein 574 (ZNF574).